A 199-amino-acid polypeptide reads, in one-letter code: mRNA export protein mlo3 (199 aa).

The disordered stretch occupies residues 1-41 (MSMELDQSLDAIIASKPKGGIRKRRARSNKPKPTKNAKPAV). Residues 19–35 (GGIRKRRARSNKPKPTK) are compositionally biased toward basic residues. The RRM domain occupies 55–134 (SKIIVSNLPT…RKMKVEIILD (80 aa)). A disordered region spans residues 144–199 (ARVSPASNASATASKNGAKSSKRKTTRRRRTPNRPKKSAEELDKEMDDYFGSNEKE). Residues 148 to 161 (PASNASATASKNGA) show a composition bias toward polar residues. Over residues 163–179 (SSKRKTTRRRRTPNRPK) the composition is skewed to basic residues.

As to quaternary structure, interacts with rpn15/dss1, mex67 and uap56.

It is found in the nucleus. Has a role in the mRNA export process. Interferes with mitotic chromosome segregation when overexpressed. The polypeptide is mRNA export protein mlo3 (mlo3) (Schizosaccharomyces pombe (strain 972 / ATCC 24843) (Fission yeast)).